A 356-amino-acid polypeptide reads, in one-letter code: Histidinol-phosphate aminotransferase (356 aa).

Lysine 214 is subject to N6-(pyridoxal phosphate)lysine.

This sequence belongs to the class-II pyridoxal-phosphate-dependent aminotransferase family. Histidinol-phosphate aminotransferase subfamily. In terms of assembly, homodimer. Pyridoxal 5'-phosphate serves as cofactor.

The enzyme catalyses L-histidinol phosphate + 2-oxoglutarate = 3-(imidazol-4-yl)-2-oxopropyl phosphate + L-glutamate. The protein operates within amino-acid biosynthesis; L-histidine biosynthesis; L-histidine from 5-phospho-alpha-D-ribose 1-diphosphate: step 7/9. The chain is Histidinol-phosphate aminotransferase (hisC) from Escherichia coli O157:H7.